A 438-amino-acid chain; its full sequence is Zinc finger protein 641 (438 aa).

Positions 1 to 53 (MQAEDRSQFGSAAEMLSEQTAALGTGWESMNVQLDGAEPQVERGSQEERPWRT) are disordered. Residues 17 to 32 (SEQTAALGTGWESMNV) show a composition bias toward polar residues. The span at 40-51 (QVERGSQEERPW) shows a compositional bias: basic and acidic residues. Positions 109-181 (VTIKDVSLCF…DPQDLEERDI (73 aa)) constitute a KRAB domain. Positions 171 to 265 (PDPQDLEERD…EMDSLLRPHT (95 aa)) are transactivation. Phosphoserine is present on serine 191. 3 consecutive C2H2-type zinc fingers follow at residues 264 to 286 (HTCP…QQTH), 292 to 314 (YSCL…QKTH), and 320 to 342 (SRCS…QRVH). Residues 345-367 (GKSCKGQEVGESPGTRKRQRAPP) form a disordered region. C2H2-type zinc fingers lie at residues 372–394 (HVCT…WLTH) and 400–422 (FQCP…LLTH). Residues 418–438 (HLLTHQGQSPRNSWDRGTSVF) are disordered. Positions 422 to 438 (HQGQSPRNSWDRGTSVF) are enriched in polar residues. Serine 426 is modified (phosphoserine).

This sequence belongs to the krueppel C2H2-type zinc-finger protein family. As to expression, highly expressed in skeletal muscle, moderate expression in heart, liver, and pancreas, lower expression in placenta, no expression seen in brain, lung, and kidney.

The protein localises to the nucleus. Transcriptional activator. Activates transcriptional activities of SRE and AP-1. The chain is Zinc finger protein 641 (ZNF641) from Homo sapiens (Human).